The primary structure comprises 171 residues: Small ribosomal subunit protein bS16 (171 aa).

The disordered stretch occupies residues 114–171; the sequence is EGGPTTEAAKPKKKAATSGAKKAAKAAEPEAAASEAAEPEAAAAPAEGGEQAESSAES. A compositionally biased stretch (low complexity) spans 142–171; the sequence is PEAAASEAAEPEAAAAPAEGGEQAESSAES.

The protein belongs to the bacterial ribosomal protein bS16 family.

This Mycolicibacterium paratuberculosis (strain ATCC BAA-968 / K-10) (Mycobacterium paratuberculosis) protein is Small ribosomal subunit protein bS16.